The primary structure comprises 41 residues: Large ribosomal subunit protein bL36 (41 aa).

This sequence belongs to the bacterial ribosomal protein bL36 family.

In Zymomonas mobilis subsp. mobilis (strain ATCC 31821 / ZM4 / CP4), this protein is Large ribosomal subunit protein bL36.